The following is a 187-amino-acid chain: UPF0301 protein YqgE (187 aa).

This sequence belongs to the UPF0301 (AlgH) family.

This Escherichia coli O127:H6 (strain E2348/69 / EPEC) protein is UPF0301 protein YqgE.